A 377-amino-acid polypeptide reads, in one-letter code: Testis-expressed protein 13A (377 aa).

Positions 92–377 are required for repression of transcription; that stretch reads WLQDLSSLHK…CGKGIWLQNP (286 aa). A coiled-coil region spans residues 122 to 156; that stretch reads QKEVALQLQMAQAKLEEVQRERDLLRLKILQAELR. An LRR repeat occupies 142–165; the sequence is ERDLLRLKILQAELRALPNAVRPA. The RanBP2-type zinc-finger motif lies at 345–369; sequence RPGDWDCPWCKAVNFSRRENCFHCG. Zn(2+) contacts are provided by cysteine 351, cysteine 354, cysteine 365, and cysteine 368.

It belongs to the TEX13 family. In terms of assembly, interacts with CNOT1; the interaction may inhibit CNOT1 binding to mRNA and subsequently CNOT1-mediated mRNA degradation.

In terms of biological role, binds to ssRNA containing the consensus sequence 5'-AGGUAA-3'. Plays a role in transcriptional repression. Required for rapid sperm motility and timely degradation of mRNA via its interaction with CNOT1. This chain is Testis-expressed protein 13A, found in Mus musculus (Mouse).